Consider the following 397-residue polypeptide: NADH-quinone oxidoreductase subunit H (397 aa).

The next 9 helical transmembrane spans lie at 7-27 (ALLITLLKAVLVALALLTAFA), 78-98 (LVYTLAPILAIGMALTAFGGI), 120-140 (ILALLALTSMGVYGIFLGGWA), 164-184 (MGLSVLGLLMLVGSTNFLDIV), 195-215 (WLILFQVFAFALFMVSSFAEV), 247-267 (MAEYVNIMTASALMSTLFFGG), 283-303 (SWPLVWLIAKIAFFMFLFIWV), 322-342 (LTLPLALVNTLVVAAVLAFVP), and 353-373 (WLLGAVSLLLLLILFAASDAV).

Belongs to the complex I subunit 1 family. As to quaternary structure, NDH-1 is composed of 15 different subunits. Subunits NuoA, H, J, K, L, M, N constitute the membrane sector of the complex.

It is found in the cell membrane. It carries out the reaction a quinone + NADH + 5 H(+)(in) = a quinol + NAD(+) + 4 H(+)(out). In terms of biological role, NDH-1 shuttles electrons from NADH, via FMN and iron-sulfur (Fe-S) centers, to quinones in the respiratory chain. The immediate electron acceptor for the enzyme in this species is believed to be ubiquinone. Couples the redox reaction to proton translocation (for every two electrons transferred, four hydrogen ions are translocated across the cytoplasmic membrane), and thus conserves the redox energy in a proton gradient. This subunit may bind ubiquinone. This chain is NADH-quinone oxidoreductase subunit H, found in Deinococcus radiodurans (strain ATCC 13939 / DSM 20539 / JCM 16871 / CCUG 27074 / LMG 4051 / NBRC 15346 / NCIMB 9279 / VKM B-1422 / R1).